The sequence spans 250 residues: MKNNQSKIKLVIDVGNSYLKIGVFHDLELIELKKFKTKYFKISYFENFYKKVFAKYKFNLFIVFGSVVPSIEQKFLDFVKENNLENNFFLINNYLKLSFKVPQEKLGLIGNDLLGAMEYASKETSNALIFLFGTASVALLLEKLNFSGAIIAPGMNFSFNNLLSKAKKLKGFKLHKENVSLWNLNTQDALESGYENLKNGFIKQIICKSNSNYPVYISGGDISNLSPEISHQFVDNIVLKGYLLIYLKNC.

13–20 (DVGNSYLK) is an ATP binding site. 110-113 (GNDL) is a substrate binding site. Asp112 (proton acceptor) is an active-site residue. Thr134 lines the ATP pocket. Thr186 contacts substrate.

It belongs to the type III pantothenate kinase family. Homodimer. The cofactor is NH4(+). K(+) serves as cofactor.

Its subcellular location is the cytoplasm. The catalysed reaction is (R)-pantothenate + ATP = (R)-4'-phosphopantothenate + ADP + H(+). The protein operates within cofactor biosynthesis; coenzyme A biosynthesis; CoA from (R)-pantothenate: step 1/5. In terms of biological role, catalyzes the phosphorylation of pantothenate (Pan), the first step in CoA biosynthesis. In Mycoplasmopsis synoviae (strain 53) (Mycoplasma synoviae), this protein is Type III pantothenate kinase.